The chain runs to 75 residues: Small integral membrane protein 7 (75 aa).

The first 17 residues, 1 to 17, serve as a signal peptide directing secretion; that stretch reads MIGDILLFGTLLMNAGA. Over 18–53 the chain is Extracellular; that stretch reads VLNFKLKKKDTQGFGEESREPSTGDNIREFLLSLRY. Residues 54–74 form a helical membrane-spanning segment; it reads FRIFIALWNIFMMFCMIVLFG. A topological domain (cytoplasmic) is located at residue S75.

It belongs to the SMIM7 family.

The protein localises to the membrane. The protein is Small integral membrane protein 7 (SMIM7) of Homo sapiens (Human).